The chain runs to 390 residues: Probable L-tyrosine/L-aspartate decarboxylase (390 aa).

N6-(pyridoxal phosphate)lysine is present on lysine 239.

The protein belongs to the group II decarboxylase family. MfnA subfamily. Pyridoxal 5'-phosphate is required as a cofactor.

It carries out the reaction L-tyrosine + H(+) = tyramine + CO2. The catalysed reaction is L-aspartate + H(+) = beta-alanine + CO2. It functions in the pathway cofactor biosynthesis; methanofuran biosynthesis. The protein operates within cofactor biosynthesis; coenzyme A biosynthesis. Its function is as follows. Catalyzes the decarboxylation of L-tyrosine to produce tyramine for methanofuran biosynthesis. Can also catalyze the decarboxylation of L-aspartate to produce beta-alanine for coenzyme A (CoA) biosynthesis. This is Probable L-tyrosine/L-aspartate decarboxylase from Methanococcus aeolicus (strain ATCC BAA-1280 / DSM 17508 / OCM 812 / Nankai-3).